The chain runs to 600 residues: E3 ubiquitin-protein ligase RLIM (600 aa).

At M1 the chain carries N-acetylmethionine. The segment covering M1 to S11 has biased composition (basic and acidic residues). Disordered stretches follow at residues M1 to R24, N49 to G355, and S417 to D497. Polar residues-rich tracts occupy residues S103–S131 and I140–E152. A Phosphoserine modification is found at S163. Residues N166–M175 show a composition bias toward polar residues. Positions E176–P187 are enriched in low complexity. Phosphoserine is present on residues S194, S227, and S229. Over residues R213–R228 the composition is skewed to basic and acidic residues. A compositionally biased stretch (polar residues) spans L244–S255. Residue S269 is modified to Phosphoserine. Positions S288–G306 are enriched in low complexity. The segment covering R322–I332 has biased composition (basic and acidic residues). Positions A333–Y349 are enriched in polar residues. Positions S448 to S475 are enriched in low complexity. The RING-type zinc finger occupies C546–R587. The short motif at E597–V600 is the PDZ-binding element.

Belongs to the RNF12 family. As to quaternary structure, interacts (via N-terminus) with TERF1. Interacts (via C-terminus) with ESR1. Interacts with LIM/homeobox factors such as LHX3. Interacts with LDB1, LDB2 and SIN3A. Interacts with LIMK1.

Its subcellular location is the nucleus. It catalyses the reaction S-ubiquitinyl-[E2 ubiquitin-conjugating enzyme]-L-cysteine + [acceptor protein]-L-lysine = [E2 ubiquitin-conjugating enzyme]-L-cysteine + N(6)-ubiquitinyl-[acceptor protein]-L-lysine.. Its pathway is protein modification; protein ubiquitination. E3 ubiquitin-protein ligase that acts as a negative coregulator for LIM homeodomain transcription factors by mediating the ubiquitination and subsequent degradation of LIM cofactors LDB1 and LDB2 and by mediating the recruitment the SIN3a/histone deacetylase corepressor complex. Ubiquitination and degradation of LIM cofactors LDB1 and LDB2 allows DNA-bound LIM homeodomain transcription factors to interact with other protein partners such as RLIM. Plays a role in telomere length-mediated growth suppression by mediating the ubiquitination and degradation of TERF1. By targeting ZFP42 for degradation, acts as an activator of random inactivation of X chromosome in the embryo, a stochastic process in which one X chromosome is inactivated to minimize sex-related dosage differences of X-encoded genes in somatic cells of female placental mammals. The sequence is that of E3 ubiquitin-protein ligase RLIM (Rlim) from Mus musculus (Mouse).